Here is a 63-residue protein sequence, read N- to C-terminus: MSRMCEICGKKPMVGNNVSHAHNVNKRRFNPNLQKVRSLQENGQVKKITVCTNCIKSGKIVKP.

It belongs to the bacterial ribosomal protein bL28 family.

The chain is Large ribosomal subunit protein bL28 from Desulfatibacillum aliphaticivorans.